The following is a 615-amino-acid chain: 1-deoxy-D-xylulose-5-phosphate synthase (615 aa).

Thiamine diphosphate-binding positions include His-72 and 111–113; that span reads GHS. Residue Asp-142 coordinates Mg(2+). Residues 143–144, Asn-171, Tyr-278, and Glu-360 contribute to the thiamine diphosphate site; that span reads GA. Asn-171 serves as a coordination point for Mg(2+).

Belongs to the transketolase family. DXPS subfamily. Homodimer. It depends on Mg(2+) as a cofactor. Thiamine diphosphate serves as cofactor.

The enzyme catalyses D-glyceraldehyde 3-phosphate + pyruvate + H(+) = 1-deoxy-D-xylulose 5-phosphate + CO2. The protein operates within metabolic intermediate biosynthesis; 1-deoxy-D-xylulose 5-phosphate biosynthesis; 1-deoxy-D-xylulose 5-phosphate from D-glyceraldehyde 3-phosphate and pyruvate: step 1/1. Catalyzes the acyloin condensation reaction between C atoms 2 and 3 of pyruvate and glyceraldehyde 3-phosphate to yield 1-deoxy-D-xylulose-5-phosphate (DXP). In Campylobacter jejuni subsp. jejuni serotype O:23/36 (strain 81-176), this protein is 1-deoxy-D-xylulose-5-phosphate synthase.